A 172-amino-acid polypeptide reads, in one-letter code: Oleosin 18 kDa (172 aa).

At A2 the chain carries N-acetylalanine. Residues 2–38 (ADRDRAGQYYQQQRGQVGETVKGILPEKAPSASQALT) are polar. The segment at 39-110 (VATLFPLGGL…GGLSSLTFLA (72 aa)) is hydrophobic. The next 3 membrane-spanning stretches (helical) occupy residues 42–62 (LFPL…ASVV), 70–90 (VFLI…LAVA), and 91–111 (GFLT…FLAN). A disordered region spans residues 147 to 172 (HAIQGRADQAGTGAGAGGGAGTKTSS). Positions 158–172 (TGAGAGGGAGTKTSS) are enriched in gly residues.

The protein belongs to the oleosin family.

It localises to the lipid droplet. The protein resides in the membrane. In terms of biological role, may have a structural role to stabilize the lipid body during desiccation of the seed by preventing coalescence of the oil. Probably interacts with both lipid and phospholipid moieties of lipid bodies. May also provide recognition signals for specific lipase anchorage in lipolysis during seedling growth. The polypeptide is Oleosin 18 kDa (OLE18) (Oryza sativa subsp. indica (Rice)).